Reading from the N-terminus, the 206-residue chain is Small ribosomal subunit protein uS4 (206 aa).

Positions 29–52 (LDKRPYAPGQHGQRRGRGRPSDYS) are disordered. The S4 RNA-binding domain maps to 96-171 (RRLDNVVFRM…QKRRRVSPWV (76 aa)).

Belongs to the universal ribosomal protein uS4 family. Part of the 30S ribosomal subunit. Contacts protein S5. The interaction surface between S4 and S5 is involved in control of translational fidelity.

In terms of biological role, one of the primary rRNA binding proteins, it binds directly to 16S rRNA where it nucleates assembly of the body of the 30S subunit. Functionally, with S5 and S12 plays an important role in translational accuracy. This chain is Small ribosomal subunit protein uS4, found in Deinococcus deserti (strain DSM 17065 / CIP 109153 / LMG 22923 / VCD115).